A 244-amino-acid polypeptide reads, in one-letter code: tRNA pseudouridine synthase A (244 aa).

The active-site Nucleophile is Asp-52. Tyr-110 lines the substrate pocket.

It belongs to the tRNA pseudouridine synthase TruA family. As to quaternary structure, homodimer.

It carries out the reaction uridine(38/39/40) in tRNA = pseudouridine(38/39/40) in tRNA. In terms of biological role, formation of pseudouridine at positions 38, 39 and 40 in the anticodon stem and loop of transfer RNAs. The sequence is that of tRNA pseudouridine synthase A from Clostridium acetobutylicum (strain ATCC 824 / DSM 792 / JCM 1419 / IAM 19013 / LMG 5710 / NBRC 13948 / NRRL B-527 / VKM B-1787 / 2291 / W).